The sequence spans 177 residues: RNA pyrophosphohydrolase (177 aa).

The Nudix hydrolase domain occupies 6-149 (GYRPNVGIVI…KRDVYRRVMK (144 aa)). The Nudix box motif lies at 38-59 (GGINPGESAEQAMYRELFEEVG).

Belongs to the Nudix hydrolase family. RppH subfamily. A divalent metal cation serves as cofactor.

In terms of biological role, accelerates the degradation of transcripts by removing pyrophosphate from the 5'-end of triphosphorylated RNA, leading to a more labile monophosphorylated state that can stimulate subsequent ribonuclease cleavage. In Cronobacter sakazakii (strain ATCC BAA-894) (Enterobacter sakazakii), this protein is RNA pyrophosphohydrolase.